A 321-amino-acid polypeptide reads, in one-letter code: Glucokinase (321 aa).

8-13 (GDVGGT) contributes to the ATP binding site.

This sequence belongs to the bacterial glucokinase family.

The protein localises to the cytoplasm. The catalysed reaction is D-glucose + ATP = D-glucose 6-phosphate + ADP + H(+). The sequence is that of Glucokinase from Salmonella agona (strain SL483).